Here is a 265-residue protein sequence, read N- to C-terminus: Mycothiol acetyltransferase (265 aa).

2 consecutive N-acetyltransferase domains span residues 1–110 and 118–265; these read MDDL…PPLP and VSVR…YVRG. A 1D-myo-inositol 2-(L-cysteinylamino)-2-deoxy-alpha-D-glucopyranoside-binding site is contributed by Asp3. 44-46 provides a ligand contact to acetyl-CoA; that stretch reads VQV. Residues Glu145, Arg185, and Glu198 each coordinate 1D-myo-inositol 2-(L-cysteinylamino)-2-deoxy-alpha-D-glucopyranoside. Acetyl-CoA-binding positions include 202-204 and 209-215; these read LGV and HCKGLGK. Tyr236 contributes to the 1D-myo-inositol 2-(L-cysteinylamino)-2-deoxy-alpha-D-glucopyranoside binding site.

It belongs to the acetyltransferase family. MshD subfamily. In terms of assembly, monomer.

The enzyme catalyses 1D-myo-inositol 2-(L-cysteinylamino)-2-deoxy-alpha-D-glucopyranoside + acetyl-CoA = mycothiol + CoA + H(+). In terms of biological role, catalyzes the transfer of acetyl from acetyl-CoA to desacetylmycothiol (Cys-GlcN-Ins) to form mycothiol. The protein is Mycothiol acetyltransferase of Segniliparus rotundus (strain ATCC BAA-972 / CDC 1076 / CIP 108378 / DSM 44985 / JCM 13578).